We begin with the raw amino-acid sequence, 253 residues long: Ubiquinone biosynthesis O-methyltransferase (253 aa).

The S-adenosyl-L-methionine site is built by R47, G78, D99, and M141.

The protein belongs to the methyltransferase superfamily. UbiG/COQ3 family.

The catalysed reaction is a 3-demethylubiquinol + S-adenosyl-L-methionine = a ubiquinol + S-adenosyl-L-homocysteine + H(+). It carries out the reaction a 3-(all-trans-polyprenyl)benzene-1,2-diol + S-adenosyl-L-methionine = a 2-methoxy-6-(all-trans-polyprenyl)phenol + S-adenosyl-L-homocysteine + H(+). It functions in the pathway cofactor biosynthesis; ubiquinone biosynthesis. Its function is as follows. O-methyltransferase that catalyzes the 2 O-methylation steps in the ubiquinone biosynthetic pathway. The protein is Ubiquinone biosynthesis O-methyltransferase of Rhodopseudomonas palustris (strain BisB5).